The sequence spans 314 residues: MDKIFVDEAVTELRTIGDMLRWAVSRFNDANVYYGHGTDNAWDEAIALVFHALHLPEEIGQQVILSNLTSSEKHKIVELIIRRVRERLPVPYLTNKARFAGLEFYVDERVLVPRSPIAEMIANRFGPWLYGKPVNRILDLCTGSGCIAIACAYEFDEAEVDALDISEDALDVAQVNVETLGVMDRVFPMQSDLFSAIPEGPQYDLIVSNPPYVDEEDIGDMPDEYHHEPAIGLASGRDGLDLTKRILANAAQYLTPTGILVVEVGNSMVHLMEQFPEVPFTWVNFENGGDGVFVLTRDQLIEHQSLFAIYRDAQ.

Belongs to the protein N5-glutamine methyltransferase family. PrmB subfamily.

The catalysed reaction is L-glutaminyl-[ribosomal protein uL3] + S-adenosyl-L-methionine = N(5)-methyl-L-glutaminyl-[ribosomal protein uL3] + S-adenosyl-L-homocysteine + H(+). Methylates large ribosomal subunit protein uL3 on a specific glutamine residue. The protein is Ribosomal protein uL3 glutamine methyltransferase of Shewanella oneidensis (strain ATCC 700550 / JCM 31522 / CIP 106686 / LMG 19005 / NCIMB 14063 / MR-1).